The following is a 1097-amino-acid chain: DNA-directed RNA polymerase subunit beta (1097 aa).

The tract at residues 1073 to 1097 is disordered; it reads DVNPRRSTPSRPTYESLGVADYDED.

Belongs to the RNA polymerase beta chain family. In cyanobacteria the RNAP catalytic core is composed of 2 alpha, 1 beta, 1 beta', 1 gamma and 1 omega subunit. When a sigma factor is associated with the core the holoenzyme is formed, which can initiate transcription.

The catalysed reaction is RNA(n) + a ribonucleoside 5'-triphosphate = RNA(n+1) + diphosphate. In terms of biological role, DNA-dependent RNA polymerase catalyzes the transcription of DNA into RNA using the four ribonucleoside triphosphates as substrates. This is DNA-directed RNA polymerase subunit beta from Synechococcus sp. (strain CC9311).